Here is a 130-residue protein sequence, read N- to C-terminus: Small ribosomal subunit protein uS8 (130 aa).

It belongs to the universal ribosomal protein uS8 family. As to quaternary structure, part of the 30S ribosomal subunit. Contacts proteins S5 and S12.

Functionally, one of the primary rRNA binding proteins, it binds directly to 16S rRNA central domain where it helps coordinate assembly of the platform of the 30S subunit. The chain is Small ribosomal subunit protein uS8 from Shewanella sediminis (strain HAW-EB3).